Here is a 360-residue protein sequence, read N- to C-terminus: MKNIFLHSLNLENYRNFKNLELKTDNTPIILIGENGSGKTNILEAISLFYPGRGLRSAKLANVCKTSEDHCLVKALLQSKLGLAEFTTQFKRSSNRRITEYNESKIANNELSKFTSMVWLTPHMEGIFTSGSSDRRKFLDRIVYNFDPKHAELVSKYEYYMHERNKILVEDRRDDNWLKIIEEKMADISNHIANNRLKTLEFMQQAIDDLENEFPKADLSIDGIVEQKILNGKKNIVSFITAELYQTRSKDKLLGRTSFGVHKSDFLVKHQKKNILAKFCSTGEQKAILIAIILAEMNYAIKLTKIAPILLLDEVFVHLDDKRRQYLIEFLTGLNMQLWVTTTNLEGIDNFATKAQLIKL.

Residue Gly-33–Thr-40 participates in ATP binding.

It belongs to the RecF family.

The protein resides in the cytoplasm. The RecF protein is involved in DNA metabolism; it is required for DNA replication and normal SOS inducibility. RecF binds preferentially to single-stranded, linear DNA. It also seems to bind ATP. In Rickettsia conorii (strain ATCC VR-613 / Malish 7), this protein is DNA replication and repair protein RecF.